A 1008-amino-acid polypeptide reads, in one-letter code: Serine/threonine-protein kinase PRP4 homolog (1008 aa).

Positions 1–103 are disordered; it reads MAAAEAPSLR…PAKRTKLDDL (103 aa). At alanine 2 the chain carries N-acetylalanine. Serine 8, serine 20, serine 23, and serine 32 each carry phosphoserine. 2 stretches are compositionally biased toward basic residues: residues 39 to 59 and 67 to 81; these read KHSR…KHKH and RKHK…HKRK. A compositionally biased stretch (basic and acidic residues) spans 82–91; sequence EVADASDKEG. Phosphoserine occurs at positions 87 and 93. At lysine 99 the chain carries N6-acetyllysine; alternate. Lysine 99 participates in a covalent cross-link: Glycyl lysine isopeptide (Lys-Gly) (interchain with G-Cter in SUMO2); alternate. Lysine 111 participates in a covalent cross-link: Glycyl lysine isopeptide (Lys-Gly) (interchain with G-Cter in SUMO2). Lysine 117 is covalently cross-linked (Glycyl lysine isopeptide (Lys-Gly) (interchain with G-Cter in SUMO2); alternate). Lysine 117 participates in a covalent cross-link: Glycyl lysine isopeptide (Lys-Gly) (interchain with G-Cter in SUMO1); alternate. Serine 131 carries the phosphoserine modification. The residue at position 140 (tyrosine 140) is a Phosphotyrosine. Disordered stretches follow at residues 140-536 and 560-584; these read YESG…EDEE and SNLS…SPDD. Phosphoserine occurs at positions 142, 144, and 166. Low complexity predominate over residues 157 to 168; it reads GNRSSTRSSSTK. Residues lysine 170 and lysine 177 each participate in a glycyl lysine isopeptide (Lys-Gly) (interchain with G-Cter in SUMO2) cross-link. 2 stretches are compositionally biased toward basic residues: residues 179–202 and 214–230; these read STKK…KKSK and RSKS…SKRS. A phosphoserine mark is found at serine 239, serine 241, serine 257, serine 277, serine 283, serine 292, and serine 294. The span at 247-270 shows a compositional bias: basic and acidic residues; the sequence is RSQEKVGKARSPVDDKAKVEDKSK. The span at 302–315 shows a compositional bias: basic residues; that stretch reads SKDRRSRSKERKSK. A compositionally biased stretch (basic and acidic residues) spans 316 to 325; that stretch reads RPEADKEKKP. 5 positions are modified to phosphoserine: serine 328, serine 354, serine 356, serine 366, and serine 368. A compositionally biased stretch (basic residues) spans 342 to 367; the sequence is PSRRPGRSPKRRSLSPKQRDKSRRSR. Phosphothreonine is present on threonine 385. Serine 387 is modified (phosphoserine). Basic and acidic residues-rich tracts occupy residues 395-408 and 415-429; these read RSLE…ERRR and RPRD…RSKD. A phosphoserine mark is found at serine 427, serine 431, and serine 437. A compositionally biased stretch (basic residues) spans 438–498; sequence PARRRASRSP…RGGRRRRSRS (61 aa). Serine 519, serine 520, serine 521, serine 566, serine 570, serine 577, serine 579, and serine 581 each carry phosphoserine. Acidic residues predominate over residues 519–536; it reads SSSDDNLEDFDVEEEDEE. The span at 563 to 582 shows a compositional bias: low complexity; that stretch reads SVPSEPSSPQSSTRSRSPSP. Glycyl lysine isopeptide (Lys-Gly) (interchain with G-Cter in SUMO2) cross-links involve residues lysine 594 and lysine 660. One can recognise a Protein kinase domain in the interval 688–1004; it reads YNVYGYTGQG…INQALQHAFI (317 aa). ATP is bound by residues 694 to 702 and lysine 718; that span reads TGQGVFSNV. The residue at position 718 (lysine 718) is an N6-acetyllysine. The active-site Proton acceptor is aspartate 816. Tyrosine 850 is modified (phosphotyrosine). At serine 853 the chain carries Phosphoserine.

This sequence belongs to the protein kinase superfamily. CMGC Ser/Thr protein kinase family. As to quaternary structure, interacts with CLK1 C-terminus. Associates with the U5 snRNP and NCOR1 deacetylase complexes. Identified in the spliceosome C complex. In terms of processing, phosphorylated by CLK1. Autophosphorylated; phosphorylation inhibits interaction with its targets, such as PRPF6 or SMARCA4.

The protein localises to the nucleus. Its subcellular location is the chromosome. It localises to the centromere. The protein resides in the kinetochore. It carries out the reaction L-seryl-[protein] + ATP = O-phospho-L-seryl-[protein] + ADP + H(+). The catalysed reaction is L-threonyl-[protein] + ATP = O-phospho-L-threonyl-[protein] + ADP + H(+). Functionally, serine/threonine kinase involved in spliceosomal assembly as well as mitosis and signaling regulation. Connects chromatin mediated regulation of transcription and pre-mRNA splicing. During spliceosomal assembly, interacts with and phosphorylates PRPF6 and PRPF31, components of the U4/U6-U5 tri-small nuclear ribonucleoprotein (snRNP), to facilitate the formation of the spliceosome B complex. Plays a role in regulating transcription and the spindle assembly checkpoint (SAC). Associates with U5 snRNP and NCOR1 deacetylase complexes which may allow a coordination of pre-mRNA splicing with chromatin remodeling events involved in transcriptional regulation. Associates and probably phosphorylates SMARCA4 and NCOR1. Phosphorylates SRSF1. Associates with kinetochores during mitosis and is necessary for recruitment and maintenance of the checkpoint proteins such as MAD1L1 and MAD12L1 at the kinetochores. Phosphorylates and regulates the activity of the transcription factors such as ELK1 and KLF13. Phosphorylates nuclear YAP1 and WWTR1/TAZ which induces nuclear exclusion and regulates Hippo signaling pathway, involved in tissue growth control. The polypeptide is Serine/threonine-protein kinase PRP4 homolog (PRP4K) (Bos taurus (Bovine)).